A 63-amino-acid chain; its full sequence is Putative conjugal transfer lipoprotein XF_a0011.1 (63 aa).

An N-terminal signal peptide occupies residues 1–15; the sequence is MRYTFGIVTVYLLAG. Residue Cys16 is the site of N-palmitoyl cysteine attachment. Residue Cys16 is the site of S-diacylglycerol cysteine attachment.

It to B.suis ORF12 in VirB region.

The protein localises to the cell inner membrane. The sequence is that of Putative conjugal transfer lipoprotein XF_a0011.1 from Xylella fastidiosa (strain 9a5c).